The chain runs to 198 residues: Transmembrane protein 9B (198 aa).

An N-terminal signal peptide occupies residues 1-33 (MATLWGGLLRLGSLLSLSCLALSVLLLAQLSDA). Residue Asn-60 is glycosylated (N-linked (GlcNAc...) asparagine). The helical transmembrane segment at 105–125 (IIIYLSILGLLLLYMVYLTLV) threads the bilayer. Ser-142 and Ser-189 each carry phosphoserine.

It belongs to the TMEM9 family. N-glycosylated.

It localises to the lysosome membrane. It is found in the early endosome membrane. Enhances production of pro-inflammatory cytokines induced by TNF, IL1B, and TLR ligands. Has a role in TNF activation of both the NF-kappaB and MAPK pathways. The polypeptide is Transmembrane protein 9B (TMEM9B) (Homo sapiens (Human)).